Here is a 754-residue protein sequence, read N- to C-terminus: Photosystem I P700 chlorophyll a apoprotein A1 (754 aa).

The next 8 membrane-spanning stretches (helical) occupy residues 72 to 95, 158 to 181, 197 to 221, 293 to 311, 351 to 374, 390 to 416, 438 to 460, and 535 to 553; these read IFSA…FHGA, LYCT…FHYH, MNHH…HVSL, TAHH…GHMY, WHAQ…HHMY, LSLF…IFMV, AIIS…LYIH, and FMVH…LILL. Residues Cys-577 and Cys-586 each contribute to the [4Fe-4S] cluster site. Transmembrane regions (helical) follow at residues 593–614 and 668–690; these read HVFL…HFSW and LSAY…MFLF. A chlorophyll a'-binding site is contributed by His-679. Residues Met-687 and Tyr-695 each contribute to the chlorophyll a site. Residue Trp-696 participates in phylloquinone binding. A helical membrane pass occupies residues 728–748; that stretch reads AVGVAHYLLGGIVTTWAFFLA.

Belongs to the PsaA/PsaB family. In terms of assembly, the PsaA/B heterodimer binds the P700 chlorophyll special pair and subsequent electron acceptors. PSI consists of a core antenna complex that captures photons, and an electron transfer chain that converts photonic excitation into a charge separation. The cyanobacterial PSI reaction center is composed of one copy each of PsaA,B,C,D,E,F,I,J,K,L,M and X, and forms trimeric complexes. Requires PSI electron transfer chain: 5 chlorophyll a, 1 chlorophyll a', 2 phylloquinones and 3 4Fe-4S clusters. PSI core antenna: 90 chlorophyll a, 22 carotenoids, 3 phospholipids and 1 galactolipid. P700 is a chlorophyll a/chlorophyll a' dimer, A0 is one or more chlorophyll a, A1 is one or both phylloquinones and FX is a shared 4Fe-4S iron-sulfur center. as cofactor.

It is found in the cellular thylakoid membrane. The catalysed reaction is reduced [plastocyanin] + hnu + oxidized [2Fe-2S]-[ferredoxin] = oxidized [plastocyanin] + reduced [2Fe-2S]-[ferredoxin]. In terms of biological role, psaA and PsaB bind P700, the primary electron donor of photosystem I (PSI), as well as the electron acceptors A0, A1 and FX. PSI is a plastocyanin/cytochrome c6-ferredoxin oxidoreductase, converting photonic excitation into a charge separation, which transfers an electron from the donor P700 chlorophyll pair to the spectroscopically characterized acceptors A0, A1, FX, FA and FB in turn. Oxidized P700 is reduced on the lumenal side of the thylakoid membrane by plastocyanin or cytochrome c6. The protein is Photosystem I P700 chlorophyll a apoprotein A1 of Rippkaea orientalis (strain PCC 8801 / RF-1) (Cyanothece sp. (strain PCC 8801)).